Here is a 286-residue protein sequence, read N- to C-terminus: Probable aquaporin PIP-type pTOM75 (286 aa).

The disordered stretch occupies residues 1-35 (MAENKEEDVKLGANKFRETQPLGTAAQTDKDYKEP). Residues 1–55 (MAENKEEDVKLGANKFRETQPLGTAAQTDKDYKEPPPAPLFEPGELSSWSFYRAG) are Cytoplasmic-facing. The span at 7-18 (EDVKLGANKFRE) shows a compositional bias: basic and acidic residues. A helical membrane pass occupies residues 56–76 (IAEFMATFLFLYITILTVMGL). Over 77–89 (KRSDSLCSSVGIQ) the chain is Extracellular. The chain crosses the membrane as a helical span at residues 90–110 (GVAWAFGGMIFALVYCTAGIS). The Cytoplasmic segment spans residues 111–133 (GGHINPAVTFGLFLARKLSLTRA). The NPA 1 signature appears at 115-117 (NPA). Residues 134 to 154 (VFYMVMQCLGAICGAGVVKGF) form a helical membrane-spanning segment. The Extracellular portion of the chain corresponds to 155-175 (MVGPYQRLGGGANVVNPGYTK). The chain crosses the membrane as a helical span at residues 176-196 (GDGLGAEIIGTFVLVYTVFSA). The Cytoplasmic segment spans residues 197–209 (TDAKRNARDSHVP). The chain crosses the membrane as a helical span at residues 210–230 (ILAPLPIGFAVFLVHLATIPI). At 231 to 257 (TGTGINPARSLGAAIIYNDEHAWNDHW) the chain is on the extracellular side. The NPA 2 signature appears at 236 to 238 (NPA). Residues 258–278 (IFWVGPMIGAALAAIYHQIII) traverse the membrane as a helical segment. Residues 279–286 (RAMPFHRS) are Cytoplasmic-facing.

This sequence belongs to the MIP/aquaporin (TC 1.A.8) family. PIP (TC 1.A.8.11) subfamily. As to expression, roots, ripening fruit and senescing leaves.

It localises to the cell membrane. In terms of biological role, aquaporins facilitate the transport of water and small neutral solutes across cell membranes. The polypeptide is Probable aquaporin PIP-type pTOM75 (Solanum lycopersicum (Tomato)).